Here is a 367-residue protein sequence, read N- to C-terminus: Sulfate/thiosulfate import ATP-binding protein CysA 2 (367 aa).

The 235-residue stretch at 3–237 folds into the ABC transporter domain; it reads VRVQNIRKEF…PVSPFVYGFI (235 aa). 35–42 serves as a coordination point for ATP; sequence GPSGSGKT.

It belongs to the ABC transporter superfamily. Sulfate/tungstate importer (TC 3.A.1.6) family. As to quaternary structure, the complex is composed of two ATP-binding proteins (CysA), two transmembrane proteins (CysT and CysW) and a solute-binding protein (CysP).

It is found in the cell inner membrane. It carries out the reaction sulfate(out) + ATP + H2O = sulfate(in) + ADP + phosphate + H(+). The catalysed reaction is thiosulfate(out) + ATP + H2O = thiosulfate(in) + ADP + phosphate + H(+). Its function is as follows. Part of the ABC transporter complex CysAWTP involved in sulfate/thiosulfate import. Responsible for energy coupling to the transport system. The polypeptide is Sulfate/thiosulfate import ATP-binding protein CysA 2 (Rhizobium meliloti (strain 1021) (Ensifer meliloti)).